Here is a 157-residue protein sequence, read N- to C-terminus: Deoxyuridine 5'-triphosphate nucleotidohydrolase (157 aa).

DUMP-binding residues include Ser-63, Gly-76, Asp-79, Tyr-82, Lys-87, Arg-132, Phe-137, and Gly-138. Residues 125–157 are disordered; it reads NDLESTERGAGGFGSTGINDEKKRKLDEAEAKE. Over residues 143–157 the composition is skewed to basic and acidic residues; that stretch reads NDEKKRKLDEAEAKE.

This sequence belongs to the dUTPase family. In terms of assembly, homotrimer. Mg(2+) is required as a cofactor.

It carries out the reaction dUTP + H2O = dUMP + diphosphate + H(+). It functions in the pathway pyrimidine metabolism; dUMP biosynthesis; dUMP from dCTP (dUTP route): step 2/2. Functionally, involved in nucleotide metabolism via production of dUMP, the immediate precursor of thymidine nucleotides, and decreases the intracellular concentration of dUTP so that uracil cannot be incorporated into DNA. This chain is Deoxyuridine 5'-triphosphate nucleotidohydrolase (DUT1), found in Yarrowia lipolytica (strain CLIB 122 / E 150) (Yeast).